The chain runs to 284 residues: Undecaprenyl-diphosphatase 2 (284 aa).

7 helical membrane passes run valine 6–proline 26, phenylalanine 46–tyrosine 66, phenylalanine 94–aspartate 114, leucine 119–valine 139, isoleucine 183–leucine 203, threonine 227–methionine 247, and phenylalanine 262–isoleucine 282.

The protein belongs to the UppP family.

The protein localises to the cell membrane. The enzyme catalyses di-trans,octa-cis-undecaprenyl diphosphate + H2O = di-trans,octa-cis-undecaprenyl phosphate + phosphate + H(+). Functionally, catalyzes the dephosphorylation of undecaprenyl diphosphate (UPP). Confers resistance to bacitracin. The protein is Undecaprenyl-diphosphatase 2 of Clostridioides difficile (strain 630) (Peptoclostridium difficile).